Here is a 251-residue protein sequence, read N- to C-terminus: Small ribosomal subunit protein uS2 (251 aa).

It belongs to the universal ribosomal protein uS2 family.

The sequence is that of Small ribosomal subunit protein uS2 from Chlorobium chlorochromatii (strain CaD3).